A 399-amino-acid chain; its full sequence is Forkhead box protein Q1 (399 aa).

A disordered region spans residues 1–112 (MKLEVFAPRA…EGARSKPYTR (112 aa)). Residues 32-54 (LSAAGDDSLGSDGDCAANSPAAG) show a composition bias toward low complexity. The span at 55–66 (SGAGDLEGGGGE) shows a compositional bias: gly residues. A DNA-binding region (fork-head) is located at residues 114-205 (PKPPYSYIAL…SEYTFADGVF (92 aa)). The interval 211–263 (RLSHRTTVSASGYGGGSPPGPAGTPQPAPTAGSSPIARSPARQEEGSSPASKF) is disordered. A compositionally biased stretch (pro residues) spans 228 to 238 (PPGPAGTPQPA).

Its subcellular location is the nucleus. In terms of biological role, plays a role in hair follicle differentiation. This Rattus norvegicus (Rat) protein is Forkhead box protein Q1 (Foxq1).